Reading from the N-terminus, the 473-residue chain is Photosystem II CP43 reaction center protein (473 aa).

A propeptide spanning residues 1–14 is cleaved from the precursor; it reads MKILYSLRRYFHVE. Thr15 is subject to N-acetylthreonine. Thr15 carries the post-translational modification Phosphothreonine. Transmembrane regions (helical) follow at residues 69-93, 134-155, 178-200, 255-275, and 291-312; these read LFEV…PHLA, LIGP…KDKN, KAIW…RKIT, KPFA…LSYS, and WFNN…ASQA. Glu367 contacts [CaMn4O5] cluster. A helical transmembrane segment spans residues 447 to 471; that stretch reads RARAAAAGFEKGIDRDSEPVLYMEP.

Belongs to the PsbB/PsbC family. PsbC subfamily. As to quaternary structure, PSII is composed of 1 copy each of membrane proteins PsbA, PsbB, PsbC, PsbD, PsbE, PsbF, PsbH, PsbI, PsbJ, PsbK, PsbL, PsbM, PsbT, PsbX, PsbY, PsbZ, Psb30/Ycf12, at least 3 peripheral proteins of the oxygen-evolving complex and a large number of cofactors. It forms dimeric complexes. It depends on Binds multiple chlorophylls and provides some of the ligands for the Ca-4Mn-5O cluster of the oxygen-evolving complex. It may also provide a ligand for a Cl- that is required for oxygen evolution. PSII binds additional chlorophylls, carotenoids and specific lipids. as a cofactor.

The protein localises to the plastid. Its subcellular location is the chloroplast thylakoid membrane. Its function is as follows. One of the components of the core complex of photosystem II (PSII). It binds chlorophyll and helps catalyze the primary light-induced photochemical processes of PSII. PSII is a light-driven water:plastoquinone oxidoreductase, using light energy to abstract electrons from H(2)O, generating O(2) and a proton gradient subsequently used for ATP formation. This is Photosystem II CP43 reaction center protein from Chara vulgaris (Common stonewort).